The sequence spans 348 residues: MTKKDIRILAFESSCDETSTAVIKNGREIESLIVATQIKSHQRFGGVVPEVASRHHIEVITQITKEALAEANATWDDIDAIAVTYGPGLVGALLIGVSAAKAASMATGIPLIGVDHIMGHIMAAQLKDEIEYPALALQVSGGHTEIVLMKDPIHFEIVGDTRDDAAGEAYDKIGRVLGVNYPAGKTIDEWAHKGKDTFHFPRAMMEDDDYDFSLSGLKSAFINTCHHADQIHEKLDKYDLAASFQASVVDVLSHKTIRAIKEYKPKTFILGGGVAANHGLRDRLAEEIEKLPADIKPKVILPDLKLCGDNAAMIGAAAYNLYKAGKFSDENLNADPSLELPYADSMLK.

Positions 116 and 120 each coordinate Fe cation. Residues 138-142 (QVSGG), aspartate 171, glycine 184, aspartate 188, and asparagine 277 contribute to the substrate site. Aspartate 309 contributes to the Fe cation binding site.

Belongs to the KAE1 / TsaD family. Requires Fe(2+) as cofactor.

Its subcellular location is the cytoplasm. It catalyses the reaction L-threonylcarbamoyladenylate + adenosine(37) in tRNA = N(6)-L-threonylcarbamoyladenosine(37) in tRNA + AMP + H(+). Functionally, required for the formation of a threonylcarbamoyl group on adenosine at position 37 (t(6)A37) in tRNAs that read codons beginning with adenine. Is involved in the transfer of the threonylcarbamoyl moiety of threonylcarbamoyl-AMP (TC-AMP) to the N6 group of A37, together with TsaE and TsaB. TsaD likely plays a direct catalytic role in this reaction. The polypeptide is tRNA N6-adenosine threonylcarbamoyltransferase (Lactobacillus gasseri (strain ATCC 33323 / DSM 20243 / BCRC 14619 / CIP 102991 / JCM 1131 / KCTC 3163 / NCIMB 11718 / NCTC 13722 / AM63)).